A 36-amino-acid polypeptide reads, in one-letter code: Photosystem I reaction center subunit VIII (36 aa).

A helical transmembrane segment spans residues 6 to 28; that stretch reads LPSIFVPLVGLMFPAIAMASLSL.

The protein belongs to the PsaI family.

The protein resides in the plastid. The protein localises to the chloroplast thylakoid membrane. May help in the organization of the PsaL subunit. The sequence is that of Photosystem I reaction center subunit VIII from Calycanthus floridus var. glaucus (Eastern sweetshrub).